The following is a 2272-amino-acid chain: Voltage-dependent R-type calcium channel subunit alpha-1E (2272 aa).

The interval 1–40 (MARFGEAVVVGRPGSGDGDSDQSRNRQGTPVPASGPAAAY) is disordered. Residues 1–90 (MARFGEAVVV…KYAKKLIDWP (90 aa)) are Cytoplasmic-facing. Serine 15 and serine 20 each carry phosphoserine. Residues 77–355 (NIVRKYAKKL…LVLGVLSGEF (279 aa)) form an I repeat. A helical membrane pass occupies residues 91-109 (PFEYMILATIIANCIVLAL). Over 110–128 (EQHLPEDDKTPMSRRLEKT) the chain is Extracellular. Residues 129–147 (EPYFIGIFCFEAGIKIVAL) traverse the membrane as a helical segment. The Cytoplasmic segment spans residues 148–159 (GFIFHKGSYLRN). A helical transmembrane segment spans residues 160-174 (GWNVMDFIVVLSGIL). The Extracellular segment spans residues 175 to 186 (ATAGTHFNTHVD). The helical transmembrane segment at 187–206 (LRALRAVRVLRPLKLVSGIP) threads the bilayer. Topologically, residues 207–224 (SLQIVLKSIMKAMVPLLQ) are cytoplasmic. A helical transmembrane segment spans residues 225–245 (IGLLLFFAILMFAIIGLEFYS). Residues 246–327 (GKLHRACFMN…NTNDALGATW (82 aa)) lie on the Extracellular side of the membrane. A glycan (N-linked (GlcNAc...) asparagine) is linked at asparagine 255. The chain crosses the membrane as a helical span at residues 328–351 (NWLYFIPLIIIGSFFVLNLVLGVL). Residues 352 to 477 (SGEFAKERER…ISIRHMVKSQ (126 aa)) are Cytoplasmic-facing. A binding to the beta subunit region spans residues 375–392 (QQIERELNGYRAWIDKAE). Residue aspartate 427 participates in Ca(2+) binding. Serine 428 is modified (phosphoserine). Ca(2+) contacts are provided by serine 429, glutamate 431, cysteine 433, and serine 438. Threonine 441 bears the Phosphothreonine mark. The stretch at 463 to 707 (ERLLRISIRH…VFLAIAVDNL (245 aa)) is one II repeat. A helical membrane pass occupies residues 478–497 (VFYWIVLSVVALNTACVAIV). The Extracellular segment spans residues 498–510 (HHNQPQWLTHLLY). The chain crosses the membrane as a helical span at residues 511 to 530 (YAEFLFLGLFLLEMSLKMYG). At 531–539 (MGPRLYFHS) the chain is on the cytoplasmic side. The chain crosses the membrane as a helical span at residues 540–558 (SFNCFDFGVTVGSIFEVVW). The Extracellular portion of the chain corresponds to 559-568 (AIFRPGTSFG). A helical membrane pass occupies residues 569–587 (ISVLRALRLLRIFKITKYW). Over 588-606 (ASLRNLVVSLMSSMKSIIS) the chain is Cytoplasmic. The helical transmembrane segment at 607–626 (LLFLLFLFIVVFALLGMQLF) threads the bilayer. At 627–679 (GGRFNFNDGTPSANFDTFPAAIMTVFQILTGEDWNEVMYNGIRSQGGVSSGMW) the chain is on the extracellular side. Residues 680–704 (SAIYFIVLTLFGNYTLLNVFLAIAV) form a helical membrane-spanning segment. Residues 705 to 1150 (DNLANAQELT…TTNPIRRACH (446 aa)) are Cytoplasmic-facing. A disordered region spans residues 730-777 (LQKAKEVSPMSAPNMPSIERDRRRRHHMSMWEPRSSHLRERRRRHHMS). Residues serine 737, serine 746, serine 794, serine 816, and serine 856 each carry the phosphoserine modification. 2 disordered regions span residues 854–994 (GGSL…VPRG) and 1091–1127 (SNKTDGEASPLKEAETKEEEEEVEKKKKQKKEKRETG). A compositionally biased stretch (basic residues) spans 914 to 927 (RHRQSQRRSRHRRV). The segment covering 934 to 946 (SASASRSRSASQE) has biased composition (low complexity). Residue serine 948 is modified to Phosphoserine. 2 stretches are compositionally biased toward basic and acidic residues: residues 956–985 (EGEKEHEPHSSHRSKEPTIHEEERTQDLRR) and 1094–1105 (TDGEASPLKEAE). Residue serine 1099 is modified to Phosphoserine. One copy of the III repeat lies at 1143–1429 (NPIRRACHYI…IFVALIIITF (287 aa)). A helical membrane pass occupies residues 1151-1167 (YIVNLRYFEMCILLVIA). Residues 1168–1191 (ASSIALAAEDPVLTNSERNKVLRY) are Extracellular-facing. The helical transmembrane segment at 1192 to 1211 (FDYVFTGVFTFEMVIKMIDQ) threads the bilayer. The Cytoplasmic segment spans residues 1212 to 1219 (GLILQDGS). A helical membrane pass occupies residues 1220–1242 (YFRDLWNILDFVVVVGALVAFAL). Residues 1243 to 1256 (ANALGTNKGRDIKT) are Extracellular-facing. Residues 1257-1274 (IKSLRVLRVLRPLKTIKR) traverse the membrane as a helical segment. Topologically, residues 1275-1293 (LPKLKAVFDCVVTSLKNVF) are cytoplasmic. Residues 1294–1313 (NILIVYKLFMFIFAVIAVQL) form a helical membrane-spanning segment. The Extracellular segment spans residues 1314-1400 (FKGKFFYCTD…DRGPSRSNRM (87 aa)). Residues 1401-1424 (EMSIFYVVYFVVFPFFFVNIFVAL) form a helical membrane-spanning segment. At 1425-1481 (IIITFQEQGDKMMEECSLEKNERACIDFAISAKPLTRYMPQNRHTFQYRVWHFVVSP) the chain is on the cytoplasmic side. Residues 1466-1729 (NRHTFQYRVW…LFVAVIMDNF (264 aa)) form an IV repeat. Residues 1482 to 1500 (SFEYTIMAMIALNTVVLMM) traverse the membrane as a helical segment. At 1501 to 1515 (KYYTAPCTYELALKY) the chain is on the extracellular side. Residues 1516–1535 (LNIAFTMVFSLECVLKVIAF) form a helical membrane-spanning segment. The Cytoplasmic segment spans residues 1536–1543 (GFLNYFRD). Residues 1544 to 1562 (TWNIFDFITVIGSITEIIL) form a helical membrane-spanning segment. Over 1563 to 1573 (TDSKLVNTSGF) the chain is Extracellular. An N-linked (GlcNAc...) asparagine glycan is attached at asparagine 1569. The chain crosses the membrane as a helical span at residues 1574–1592 (NMSFLKLFRAARLIKLLRQ). Residues 1593–1611 (GYTIRILLWTFVQSFKALP) lie on the Cytoplasmic side of the membrane. The helical transmembrane segment at 1612 to 1631 (YVCLLIAMLFFIYAIIGMQV) threads the bilayer. Topologically, residues 1632-1700 (FGNIKLDEES…QNESERCGTD (69 aa)) are extracellular. Asparagine 1692 carries an N-linked (GlcNAc...) asparagine glycan. Residues 1701–1726 (LAYVYFVSFIFFCSFLMLNLFVAVIM) form a helical membrane-spanning segment. Topologically, residues 1727–2272 (DNFEYLTRDS…LSDTEEDDKC (546 aa)) are cytoplasmic. Positions 1742–1777 (HHLDEFVRVWAEYDRAACGRIHYTEMYEMLTLMSPP) constitute an EF-hand domain. 3 residues coordinate Ca(2+): aspartate 1755, arginine 1761, and glutamate 1766. The segment at 2021 to 2186 (SAHRLNSDSG…QQGQHPSPQH (166 aa)) is disordered. The span at 2025–2045 (LNSDSGHKSDTHRSGGRERGR) shows a compositional bias: basic and acidic residues. Phosphoserine occurs at positions 2054 and 2073. Basic and acidic residues predominate over residues 2061-2078 (NSEERGTQADWESPERRQ). Over residues 2097-2112 (SLSESSIPSISDTSTP) the composition is skewed to low complexity. Residues 2155 to 2174 (LASQALESNSACLTESSNSL) show a composition bias toward polar residues. Positions 2175–2186 (HPQQGQHPSPQH) are enriched in low complexity.

Belongs to the calcium channel alpha-1 subunit (TC 1.A.1.11) family. CACNA1E subfamily. As to quaternary structure, interacts with EFHC1. Voltage-dependent calcium channels are multisubunit complexes, consisting of alpha-1, alpha-2, beta and delta subunits in a 1:1:1:1 ratio. The channel activity is directed by the pore-forming and voltage-sensitive alpha-1 subunit. In many cases, this subunit is sufficient to generate voltage-sensitive calcium channel activity. The auxiliary subunits beta and alpha-2/delta linked by a disulfide bridge regulate the channel activity. In terms of tissue distribution, expressed in neuronal tissues, retina, spleen, and pancreatic islet cells.

It is found in the membrane. It catalyses the reaction Ca(2+)(in) = Ca(2+)(out). Functionally, voltage-sensitive calcium channels (VSCC) mediate the entry of calcium ions into excitable cells and are also involved in a variety of calcium-dependent processes, including muscle contraction, hormone or neurotransmitter release, gene expression, cell motility, cell division and cell death. The isoform alpha-1E gives rise to R-type calcium currents. R-type calcium channels belong to the 'high-voltage activated' (HVA) group and are blocked by nickel. They are however insensitive to dihydropyridines (DHP). Calcium channels containing alpha-1E subunit could be involved in the modulation of firing patterns of neurons which is important for information processing. This is Voltage-dependent R-type calcium channel subunit alpha-1E (Cacna1e) from Mus musculus (Mouse).